The primary structure comprises 151 residues: Large ribosomal subunit protein bL9 (151 aa).

Belongs to the bacterial ribosomal protein bL9 family.

Functionally, binds to the 23S rRNA. The chain is Large ribosomal subunit protein bL9 from Bordetella bronchiseptica (strain ATCC BAA-588 / NCTC 13252 / RB50) (Alcaligenes bronchisepticus).